The chain runs to 339 residues: Nicotinate-nucleotide--dimethylbenzimidazole phosphoribosyltransferase (339 aa).

The active-site Proton acceptor is the E306.

This sequence belongs to the CobT family.

The catalysed reaction is 5,6-dimethylbenzimidazole + nicotinate beta-D-ribonucleotide = alpha-ribazole 5'-phosphate + nicotinate + H(+). It functions in the pathway nucleoside biosynthesis; alpha-ribazole biosynthesis; alpha-ribazole from 5,6-dimethylbenzimidazole: step 1/2. Catalyzes the synthesis of alpha-ribazole-5'-phosphate from nicotinate mononucleotide (NAMN) and 5,6-dimethylbenzimidazole (DMB). This Brucella melitensis biotype 1 (strain ATCC 23456 / CCUG 17765 / NCTC 10094 / 16M) protein is Nicotinate-nucleotide--dimethylbenzimidazole phosphoribosyltransferase.